Here is a 283-residue protein sequence, read N- to C-terminus: Bifunctional protein FolD (283 aa).

NADP(+)-binding positions include 165 to 167 (GRS), Ser-190, and Val-231.

It belongs to the tetrahydrofolate dehydrogenase/cyclohydrolase family. Homodimer.

The catalysed reaction is (6R)-5,10-methylene-5,6,7,8-tetrahydrofolate + NADP(+) = (6R)-5,10-methenyltetrahydrofolate + NADPH. It carries out the reaction (6R)-5,10-methenyltetrahydrofolate + H2O = (6R)-10-formyltetrahydrofolate + H(+). Its pathway is one-carbon metabolism; tetrahydrofolate interconversion. Catalyzes the oxidation of 5,10-methylenetetrahydrofolate to 5,10-methenyltetrahydrofolate and then the hydrolysis of 5,10-methenyltetrahydrofolate to 10-formyltetrahydrofolate. The chain is Bifunctional protein FolD from Bacillus pumilus (strain SAFR-032).